A 414-amino-acid polypeptide reads, in one-letter code: TAR DNA-binding protein 43 (414 aa).

Glycyl lysine isopeptide (Lys-Gly) (interchain with G-Cter in SUMO2) cross-links involve residues Lys-79, Lys-84, Lys-95, Lys-102, and Lys-181. RRM domains lie at 104–200 (SDLI…RCTE) and 191–262 (RKVF…NAEP). Position 183 is a phosphoserine (Ser-183). Positions 216-414 (DVMDVFIPKP…MDSKSSGWGM (199 aa)) are interaction with UBQLN2. Positions 261–274 (EPKHNSNRQLERSG) are enriched in basic and acidic residues. Disordered regions lie at residues 261–303 (EPKH…GNNQ) and 341–373 (ASQQ…GNNS). Lys-263 participates in a covalent cross-link: Glycyl lysine isopeptide (Lys-Gly) (interchain with G-Cter in SUMO2). A compositionally biased stretch (gly residues) spans 275–303 (RFGGNPGGFGNQGGFGNSRGGGAGLGNNQ). A Phosphoserine modification is found at Ser-292. Arg-293 bears the Omega-N-methylarginine mark. Low complexity predominate over residues 342 to 358 (SQQNQSGPSGNNQNQGN).

As to quaternary structure, monomer and component of the SFPQ-NONO complex, which is probably a heterotetramer of two 52 kDa (NONO) and two 100 kDa (SFPQ) subunits. NONO is a component of spliceosome and U5.4/6 snRNP complexes. Interacts with CPNE4 (via VWFA domain). Forms heterodimers with PSPC1; this involves formation of a coiled coil domain by helices from both proteins. Part of complex consisting of SFPQ, NONO and MATR3. Part of a complex consisting of SFPQ, NONO and NR5A1. Part of a complex consisting of SFPQ, NONO and TOP1. Interacts with SPI1. Interacts with RNF43. Interacts with PER1 and PER2. Part of the HDP-RNP complex composed of at least HEXIM1, PRKDC, XRCC5, XRCC6, paraspeckle proteins (SFPQ, NONO, PSPC1, RBM14, and MATR3) and NEAT1 RNA. Interacts (via second RRM domain) with WASL; the interaction is direct. Component of a multiprotein complex with WASL and SFPQ. Interacts with ERCC6. Interacts (via DNA-binding domain) with TET1. Hyperphosphorylated. Post-translationally, ubiquitinated.

Its subcellular location is the nucleus. It is found in the nucleolus. The protein resides in the nucleus speckle. The protein localises to the chromosome. It localises to the mitochondrion. DNA- and RNA binding protein, involved in several nuclear processes. Binds the conventional octamer sequence in double-stranded DNA. Also binds single-stranded DNA and RNA at a site independent of the duplex site. Involved in pre-mRNA splicing, probably as a heterodimer with SFPQ. Interacts with U5 snRNA, probably by binding to a purine-rich sequence located on the 3' side of U5 snRNA stem 1b. Together with PSPC1, required for the formation of nuclear paraspeckles. The SFPQ-NONO heteromer associated with MATR3 may play a role in nuclear retention of defective RNAs. The SFPQ-NONO heteromer may be involved in DNA unwinding by modulating the function of topoisomerase I/TOP1. The SFPQ-NONO heteromer may be involved in DNA non-homologous end joining (NHEJ) required for double-strand break repair and V(D)J recombination and may stabilize paired DNA ends. In vitro, the complex strongly stimulates DNA end joining, binds directly to the DNA substrates and cooperates with the Ku70/G22P1-Ku80/XRCC5 (Ku) dimer to establish a functional preligation complex. NONO is involved in transcriptional regulation. The SFPQ-NONO-NR5A1 complex binds to the CYP17 promoter and regulates basal and cAMP-dependent transcriptional activity. NONO binds to an enhancer element in long terminal repeats of endogenous intracisternal A particles (IAPs) and activates transcription. Regulates the circadian clock by repressing the transcriptional activator activity of the CLOCK-BMAL1 heterodimer. Important for the functional organization of GABAergic synapses. Plays a specific and important role in the regulation of synaptic RNAs and GPHN/gephyrin scaffold structure, through the regulation of GABRA2 transcript. Plays a key role during neuronal differentiation by recruiting TET1 to genomic loci and thereby regulating 5-hydroxymethylcytosine levels. Plays a role in the regulation of DNA virus-mediated innate immune response by assembling into the HDP-RNP complex, a complex that serves as a platform for IRF3 phosphorylation and subsequent innate immune response activation through the cGAS-STING pathway. The chain is TAR DNA-binding protein 43 (TARDBP) from Pongo abelii (Sumatran orangutan).